Consider the following 143-residue polypeptide: Putative nickel-responsive regulator (143 aa).

Ni(2+)-binding residues include histidine 82, histidine 97, histidine 99, and cysteine 105.

Belongs to the transcriptional regulatory CopG/NikR family. Ni(2+) serves as cofactor.

In terms of biological role, transcriptional regulator. The sequence is that of Putative nickel-responsive regulator from Helicobacter hepaticus (strain ATCC 51449 / 3B1).